The following is a 405-amino-acid chain: S-adenosylmethionine synthase (405 aa).

141 to 146 (GQGSVD) is an ATP binding site.

The protein belongs to the AdoMet synthase 2 family. Requires Mg(2+) as cofactor.

The catalysed reaction is L-methionine + ATP + H2O = S-adenosyl-L-methionine + phosphate + diphosphate. It functions in the pathway amino-acid biosynthesis; S-adenosyl-L-methionine biosynthesis; S-adenosyl-L-methionine from L-methionine: step 1/1. Catalyzes the formation of S-adenosylmethionine from methionine and ATP. This is S-adenosylmethionine synthase from Methanococcus maripaludis (Methanococcus deltae).